A 314-amino-acid chain; its full sequence is Lipoyl synthase (314 aa).

Positions 60, 65, 71, 86, 90, 93, and 300 each coordinate [4Fe-4S] cluster. One can recognise a Radical SAM core domain in the interval 72 to 289 (FRKGTATFMI…RQFGLSIGFS (218 aa)).

It belongs to the radical SAM superfamily. Lipoyl synthase family. [4Fe-4S] cluster serves as cofactor.

The protein resides in the cytoplasm. The enzyme catalyses [[Fe-S] cluster scaffold protein carrying a second [4Fe-4S](2+) cluster] + N(6)-octanoyl-L-lysyl-[protein] + 2 oxidized [2Fe-2S]-[ferredoxin] + 2 S-adenosyl-L-methionine + 4 H(+) = [[Fe-S] cluster scaffold protein] + N(6)-[(R)-dihydrolipoyl]-L-lysyl-[protein] + 4 Fe(3+) + 2 hydrogen sulfide + 2 5'-deoxyadenosine + 2 L-methionine + 2 reduced [2Fe-2S]-[ferredoxin]. It functions in the pathway protein modification; protein lipoylation via endogenous pathway; protein N(6)-(lipoyl)lysine from octanoyl-[acyl-carrier-protein]: step 2/2. Its function is as follows. Catalyzes the radical-mediated insertion of two sulfur atoms into the C-6 and C-8 positions of the octanoyl moiety bound to the lipoyl domains of lipoate-dependent enzymes, thereby converting the octanoylated domains into lipoylated derivatives. The chain is Lipoyl synthase from Pelobacter propionicus (strain DSM 2379 / NBRC 103807 / OttBd1).